Consider the following 105-residue polypeptide: 3-phenylpropionate/cinnamic acid dioxygenase ferredoxin subunit (105 aa).

The Rieske domain occupies 4-99 (LFVCTVEELP…VVVKDGNIYI (96 aa)). Cysteine 42, histidine 44, cysteine 62, and histidine 65 together coordinate [2Fe-2S] cluster.

Belongs to the bacterial ring-hydroxylating dioxygenase ferredoxin component family. In terms of assembly, this dioxygenase system consists of four proteins: the two subunits of the hydroxylase component (HcaE and HcaF), a ferredoxin (HcaC) and a ferredoxin reductase (HcaD). [2Fe-2S] cluster is required as a cofactor.

Its pathway is aromatic compound metabolism; 3-phenylpropanoate degradation. In terms of biological role, part of the multicomponent 3-phenylpropionate dioxygenase, that converts 3-phenylpropionic acid (PP) and cinnamic acid (CI) into 3-phenylpropionate-dihydrodiol (PP-dihydrodiol) and cinnamic acid-dihydrodiol (CI-dihydrodiol), respectively. This protein seems to be a 2Fe-2S ferredoxin. In Photorhabdus laumondii subsp. laumondii (strain DSM 15139 / CIP 105565 / TT01) (Photorhabdus luminescens subsp. laumondii), this protein is 3-phenylpropionate/cinnamic acid dioxygenase ferredoxin subunit.